Here is a 182-residue protein sequence, read N- to C-terminus: Small ribosomal subunit protein uS5 (182 aa).

An S5 DRBM domain is found at 16–79; that stretch reads FVDRLVHINR…ESAKRGMIYV (64 aa).

This sequence belongs to the universal ribosomal protein uS5 family. As to quaternary structure, part of the 30S ribosomal subunit. Contacts proteins S4 and S8.

Its function is as follows. With S4 and S12 plays an important role in translational accuracy. Located at the back of the 30S subunit body where it stabilizes the conformation of the head with respect to the body. This Bartonella tribocorum (strain CIP 105476 / IBS 506) protein is Small ribosomal subunit protein uS5.